The chain runs to 319 residues: MISRHLQNNLMSVDPVSSQAMELSDVTLIEGVGNEVMVVAGVVVLTLALVLAWLSTYVADSSNSQLLGTIVSAGDTSVLHLGHVDQLVNQGTPEPTEHPHPSGGSDDKAEETSDSGGDTTGEPGARGDMEPSLEHLLDIQGLPKRQAGLESSRPEASLGLDDSTCLSPSPSLINVRLKFLNDTEELAVARPEDTVGTLKSKYFPGQESQMKLIYQGRLLQDPARTLSSLNITNNCVIHCHRSPPGAAVSGPSTSLTPTTEQSSLGVNVGSLMVPVFVVLLGVVWYFRINYRQFFTAPATVSLVGVTVFFSFLVFGMYGR.

Residues 36-56 (VMVVAGVVVLTLALVLAWLST) traverse the membrane as a helical segment. Disordered stretches follow at residues 88–130 (VNQG…GDME) and 146–165 (QAGLESSRPEASLGLDDSTC). The span at 95–111 (PTEHPHPSGGSDDKAEE) shows a compositional bias: basic and acidic residues. One can recognise a Ubiquitin-like domain in the interval 173–246 (INVRLKFLND…IHCHRSPPGA (74 aa)). 2 helical membrane-spanning segments follow: residues 264–284 (LGVNVGSLMVPVFVVLLGVVW) and 293–313 (FFTAPATVSLVGVTVFFSFLV).

The protein resides in the membrane. This chain is Transmembrane and ubiquitin-like domain-containing protein 2 (Tmub2), found in Rattus norvegicus (Rat).